A 233-amino-acid chain; its full sequence is Large ribosomal subunit protein uL1 (233 aa).

It belongs to the universal ribosomal protein uL1 family. In terms of assembly, part of the 50S ribosomal subunit.

Binds directly to 23S rRNA. The L1 stalk is quite mobile in the ribosome, and is involved in E site tRNA release. Functionally, protein L1 is also a translational repressor protein, it controls the translation of the L11 operon by binding to its mRNA. The chain is Large ribosomal subunit protein uL1 from Rhizobium etli (strain CIAT 652).